A 405-amino-acid polypeptide reads, in one-letter code: Cytoplasmic 60S subunit biogenesis factor ZNF622 (405 aa).

2 consecutive U1-type zinc fingers follow at residues 4–28 (YTCI…TDWH) and 67–91 (TYCT…SKKH). The tract at residues 135 to 230 (AIRAQPSSSP…GVEEEEEKQA (96 aa)) is disordered. A compositionally biased stretch (acidic residues) spans 194 to 228 (AEEEEDSEEGWEEMDSDEDLGSEEEMEGVEEEEEK).

The protein belongs to the REI1 family. In terms of assembly, homo- and heterodimer. Associates with pre-60S ribosomal particles. Mainly expressed in the ovary. As to expression, mainly expressed in the testis.

The protein localises to the cytoplasm. It is found in the nucleus. Functionally, pre-60S-associated cytoplasmic factor involved in the cytoplasmic maturation of the 60S subunit. This chain is Cytoplasmic 60S subunit biogenesis factor ZNF622 (ZNF622), found in Gallus gallus (Chicken).